A 149-amino-acid chain; its full sequence is 3-hydroxyacyl-[acyl-carrier-protein] dehydratase FabZ (149 aa).

Histidine 50 is an active-site residue.

This sequence belongs to the thioester dehydratase family. FabZ subfamily.

It localises to the cytoplasm. It catalyses the reaction a (3R)-hydroxyacyl-[ACP] = a (2E)-enoyl-[ACP] + H2O. Its function is as follows. Involved in unsaturated fatty acids biosynthesis. Catalyzes the dehydration of short chain beta-hydroxyacyl-ACPs and long chain saturated and unsaturated beta-hydroxyacyl-ACPs. This Pediococcus pentosaceus (strain ATCC 25745 / CCUG 21536 / LMG 10740 / 183-1w) protein is 3-hydroxyacyl-[acyl-carrier-protein] dehydratase FabZ.